The chain runs to 293 residues: NAD kinase (293 aa).

The active-site Proton acceptor is the Asp-73. NAD(+)-binding positions include 73 to 74 (DG), 147 to 148 (NE), Arg-175, Asp-177, and 188 to 193 (TAYSMS).

It belongs to the NAD kinase family. The cofactor is a divalent metal cation.

The protein localises to the cytoplasm. The catalysed reaction is NAD(+) + ATP = ADP + NADP(+) + H(+). Functionally, involved in the regulation of the intracellular balance of NAD and NADP, and is a key enzyme in the biosynthesis of NADP. Catalyzes specifically the phosphorylation on 2'-hydroxyl of the adenosine moiety of NAD to yield NADP. This Colwellia psychrerythraea (strain 34H / ATCC BAA-681) (Vibrio psychroerythus) protein is NAD kinase.